The following is a 530-amino-acid chain: Autoinducer-2 kinase (530 aa).

It belongs to the FGGY kinase family.

The protein resides in the cytoplasm. The enzyme catalyses (S)-4,5-dihydroxypentane-2,3-dione + ATP = (2S)-2-hydroxy-3,4-dioxopentyl phosphate + ADP + H(+). Its function is as follows. Catalyzes the phosphorylation of autoinducer-2 (AI-2) to phospho-AI-2, which subsequently inactivates the transcriptional regulator LsrR and leads to the transcription of the lsr operon. Phosphorylates the ring-open form of (S)-4,5-dihydroxypentane-2,3-dione (DPD), which is the precursor to all AI-2 signaling molecules, at the C5 position. The polypeptide is Autoinducer-2 kinase (Enterobacter sp. (strain 638)).